The sequence spans 257 residues: Proteasome assembly chaperone 1 (257 aa).

It belongs to the PSMG1 family. Forms a heterodimer with psmg2.

Chaperone protein which promotes assembly of the 20S proteasome as part of a heterodimer with psmg2. The sequence is that of Proteasome assembly chaperone 1 (psmg1) from Nematostella vectensis (Starlet sea anemone).